The following is a 153-amino-acid chain: UPF0102 protein Pnap_0271 (153 aa).

Belongs to the UPF0102 family.

This chain is UPF0102 protein Pnap_0271, found in Polaromonas naphthalenivorans (strain CJ2).